The following is a 270-amino-acid chain: Ribosomal RNA small subunit methyltransferase A (270 aa).

Residues asparagine 18, leucine 20, glycine 45, glutamate 66, aspartate 91, and asparagine 112 each coordinate S-adenosyl-L-methionine.

Belongs to the class I-like SAM-binding methyltransferase superfamily. rRNA adenine N(6)-methyltransferase family. RsmA subfamily.

The protein resides in the cytoplasm. The enzyme catalyses adenosine(1518)/adenosine(1519) in 16S rRNA + 4 S-adenosyl-L-methionine = N(6)-dimethyladenosine(1518)/N(6)-dimethyladenosine(1519) in 16S rRNA + 4 S-adenosyl-L-homocysteine + 4 H(+). Specifically dimethylates two adjacent adenosines (A1518 and A1519) in the loop of a conserved hairpin near the 3'-end of 16S rRNA in the 30S particle. May play a critical role in biogenesis of 30S subunits. This chain is Ribosomal RNA small subunit methyltransferase A, found in Psychromonas ingrahamii (strain DSM 17664 / CCUG 51855 / 37).